Here is a 192-residue protein sequence, read N- to C-terminus: Adenylate kinase (192 aa).

10–18 (GVPGVGGTT) is a binding site for ATP.

Belongs to the archaeal adenylate kinase family. In terms of assembly, monomer.

The protein localises to the cytoplasm. The catalysed reaction is AMP + ATP = 2 ADP. The protein is Adenylate kinase of Methanococcus maripaludis (strain DSM 14266 / JCM 13030 / NBRC 101832 / S2 / LL).